The sequence spans 247 residues: Triosephosphate isomerase (247 aa).

Positions 10 and 12 each coordinate substrate. Histidine 94 (electrophile) is an active-site residue. Catalysis depends on glutamate 164, which acts as the Proton acceptor.

Belongs to the triosephosphate isomerase family. In terms of assembly, homodimer.

It is found in the cytoplasm. It carries out the reaction D-glyceraldehyde 3-phosphate = dihydroxyacetone phosphate. The enzyme catalyses dihydroxyacetone phosphate = methylglyoxal + phosphate. It functions in the pathway carbohydrate biosynthesis; gluconeogenesis. It participates in carbohydrate degradation; glycolysis; D-glyceraldehyde 3-phosphate from glycerone phosphate: step 1/1. In terms of biological role, triosephosphate isomerase is an extremely efficient metabolic enzyme that catalyzes the interconversion between dihydroxyacetone phosphate (DHAP) and D-glyceraldehyde-3-phosphate (G3P) in glycolysis and gluconeogenesis. Its function is as follows. It is also responsible for the non-negligible production of methylglyoxal a reactive cytotoxic side-product that modifies and can alter proteins, DNA and lipids. The chain is Triosephosphate isomerase from Latimeria chalumnae (Coelacanth).